A 278-amino-acid polypeptide reads, in one-letter code: Pyrroline-5-carboxylate reductase (278 aa).

Belongs to the pyrroline-5-carboxylate reductase family.

The protein resides in the cytoplasm. The enzyme catalyses L-proline + NADP(+) = (S)-1-pyrroline-5-carboxylate + NADPH + 2 H(+). It catalyses the reaction L-proline + NAD(+) = (S)-1-pyrroline-5-carboxylate + NADH + 2 H(+). The protein operates within amino-acid biosynthesis; L-proline biosynthesis; L-proline from L-glutamate 5-semialdehyde: step 1/1. The chain is Pyrroline-5-carboxylate reductase from Actinidia chinensis var. chinensis (Chinese soft-hair kiwi).